The chain runs to 153 residues: ORM1-like protein 2 (153 aa).

The Cytoplasmic segment spans residues 1–21 (MNVGVAHSEVNPNTRVMSSRG). 2 helical membrane-spanning segments follow: residues 22–42 (IWLA…SIPF) and 43–63 (FSIP…MYLL). Over 64-105 (LHTVKGTPFETPDQGKDRLLTHWEQIDYGMQCTSSRKFLSIS) the chain is Cytoplasmic. A helical membrane pass occupies residues 106 to 126 (PVVLYLLTSFYIKYDPAHFMI). At 127 to 153 (NTASLLSVLLPKLPQFHGVRVFGINKY) the chain is on the extracellular side.

The protein belongs to the ORM family. In terms of assembly, ceramide-sensitive subunit of the serine palmitoyltransferase (SPT) complex, which is also composed of SPTLC1, SPTLC2/3 and SPTSSA/B.

It is found in the endoplasmic reticulum membrane. Functionally, plays an essential role in the homeostatic regulation of sphingolipid de novo biosynthesis by modulating the activity of the serine palmitoyltransferase (SPT) in response to ceramide levels. When complexed to SPT, the binding of ceramides to its N-terminus stabilizes a conformation that block SPT substrate entry, hence preventing SPT catalytic activity. Through this mechanism, maintains ceramide levels at sufficient concentrations for the production of complex sphingolipids, but which prevents the accumulation of ceramides to levels that trigger apoptosis. This chain is ORM1-like protein 2 (ORMDL2), found in Gallus gallus (Chicken).